Reading from the N-terminus, the 156-residue chain is ATP synthase subunit b (156 aa).

Residues 7–27 (LIVQMLVFVVFIGLTMKFIWP) traverse the membrane as a helical segment.

It belongs to the ATPase B chain family. F-type ATPases have 2 components, F(1) - the catalytic core - and F(0) - the membrane proton channel. F(1) has five subunits: alpha(3), beta(3), gamma(1), delta(1), epsilon(1). F(0) has three main subunits: a(1), b(2) and c(10-14). The alpha and beta chains form an alternating ring which encloses part of the gamma chain. F(1) is attached to F(0) by a central stalk formed by the gamma and epsilon chains, while a peripheral stalk is formed by the delta and b chains.

It is found in the cell inner membrane. Its function is as follows. F(1)F(0) ATP synthase produces ATP from ADP in the presence of a proton or sodium gradient. F-type ATPases consist of two structural domains, F(1) containing the extramembraneous catalytic core and F(0) containing the membrane proton channel, linked together by a central stalk and a peripheral stalk. During catalysis, ATP synthesis in the catalytic domain of F(1) is coupled via a rotary mechanism of the central stalk subunits to proton translocation. Functionally, component of the F(0) channel, it forms part of the peripheral stalk, linking F(1) to F(0). This chain is ATP synthase subunit b, found in Coxiella burnetii (strain CbuK_Q154) (Coxiella burnetii (strain Q154)).